A 457-amino-acid chain; its full sequence is Argininosuccinate lyase (457 aa).

It belongs to the lyase 1 family. Argininosuccinate lyase subfamily.

The protein localises to the cytoplasm. The catalysed reaction is 2-(N(omega)-L-arginino)succinate = fumarate + L-arginine. Its pathway is amino-acid biosynthesis; L-arginine biosynthesis; L-arginine from L-ornithine and carbamoyl phosphate: step 3/3. The chain is Argininosuccinate lyase from Pasteurella multocida (strain Pm70).